Consider the following 344-residue polypeptide: N-acetyl-gamma-glutamyl-phosphate reductase (344 aa).

Cysteine 148 is an active-site residue.

It belongs to the NAGSA dehydrogenase family. Type 1 subfamily.

Its subcellular location is the cytoplasm. It carries out the reaction N-acetyl-L-glutamate 5-semialdehyde + phosphate + NADP(+) = N-acetyl-L-glutamyl 5-phosphate + NADPH + H(+). It functions in the pathway amino-acid biosynthesis; L-arginine biosynthesis; N(2)-acetyl-L-ornithine from L-glutamate: step 3/4. In terms of biological role, catalyzes the NADPH-dependent reduction of N-acetyl-5-glutamyl phosphate to yield N-acetyl-L-glutamate 5-semialdehyde. This chain is N-acetyl-gamma-glutamyl-phosphate reductase, found in Clostridium beijerinckii (strain ATCC 51743 / NCIMB 8052) (Clostridium acetobutylicum).